Here is a 227-residue protein sequence, read N- to C-terminus: Ubiquitin domain-containing protein 1 (227 aa).

Positions 1–42 are disordered; that stretch reads MGNCVGRQRRERPAAPGHPRKRAGRNEPLKKERLKWKSDYPM. Positions 24–38 are enriched in basic and acidic residues; sequence GRNEPLKKERLKWKS. The 76-residue stretch at 149 to 224 folds into the Ubiquitin-like domain; that stretch reads FPLKVRLSTG…IQVIINQPPP (76 aa).

Interacts with UBTD1.

May be involved in the regulation of cellular senescence through a positive feedback loop with TP53. Is a TP53 downstream target gene that increases the stability of TP53 protein by promoting the ubiquitination and degradation of MDM2. In Mus musculus (Mouse), this protein is Ubiquitin domain-containing protein 1 (Ubtd1).